The chain runs to 502 residues: Ubiquitin-associated protein 1 (502 aa).

An interaction with ESCRT-I region spans residues 1-95 (MASKKLGTDV…AEAKVNSKSG (95 aa)). The UMA domain maps to 17-63 (LDDVPFKIGDKFKTPAKVGLPIGFSLPDCLQVVREMQYDFSLEKKTI). The span at 80–100 (ERKAEEAEAKVNSKSGPEGDS) shows a compositional bias: basic and acidic residues. Disordered stretches follow at residues 80-117 (ERKA…PPPI) and 135-156 (VSSS…DFNP). 3 positions are modified to phosphoserine: Ser146, Ser205, and Ser289. An interaction with PTPN23 region spans residues 260–290 (VSNIKSLSFPKLDSDDSNQKTVKLASTFHST). UBA domains follow at residues 389–430 (SPSE…LFAH) and 451–498 (QCSE…LMAR).

In terms of assembly, component of an ESCRT-I complex (endosomal sorting complex required for transport I) which consists of TSG101, VPS28, VPS37A and UBAP1 in a 1:1:1:1 stoichiometry. Interacts with PTPN23. Interacts (via UBA domains) with ubiquitinated proteins. As to expression, ubiquitous. Highly expressed in heart, liver, brain, kidney, spleen, skeletal muscle, stomach, testis and lung.

It is found in the cytoplasm. Its subcellular location is the cytosol. It localises to the endosome. Functionally, component of the ESCRT-I complex, a regulator of vesicular trafficking process. Binds to ubiquitinated cargo proteins and is required for the sorting of endocytic ubiquitinated cargos into multivesicular bodies (MVBs). Plays a role in the proteasomal degradation of ubiquitinated cell-surface proteins, such as EGFR and BST2. The polypeptide is Ubiquitin-associated protein 1 (Mus musculus (Mouse)).